Reading from the N-terminus, the 227-residue chain is Cytochrome c oxidase subunit 2 (227 aa).

The Mitochondrial intermembrane portion of the chain corresponds to 1-14 (MAYPFQLGFQDATS). Residues 15 to 45 (PIMEELLHFHDHTLMIVFLISSLVLYVISAM) traverse the membrane as a helical segment. Residues 46–59 (LTTNLTHTSTMDAQ) are Mitochondrial matrix-facing. A helical membrane pass occupies residues 60-87 (EVETIWTILPAIILITIALPSLRILYMM). Topologically, residues 88-227 (DEINNPAMTI…YFEKWSVSML (140 aa)) are mitochondrial intermembrane. The Cu cation site is built by H161, C196, E198, C200, H204, and M207. Position 198 (E198) interacts with Mg(2+). At Y218 the chain carries Phosphotyrosine.

Belongs to the cytochrome c oxidase subunit 2 family. Component of the cytochrome c oxidase (complex IV, CIV), a multisubunit enzyme composed of 14 subunits. The complex is composed of a catalytic core of 3 subunits MT-CO1, MT-CO2 and MT-CO3, encoded in the mitochondrial DNA, and 11 supernumerary subunits COX4I, COX5A, COX5B, COX6A, COX6B, COX6C, COX7A, COX7B, COX7C, COX8 and NDUFA4, which are encoded in the nuclear genome. The complex exists as a monomer or a dimer and forms supercomplexes (SCs) in the inner mitochondrial membrane with NADH-ubiquinone oxidoreductase (complex I, CI) and ubiquinol-cytochrome c oxidoreductase (cytochrome b-c1 complex, complex III, CIII), resulting in different assemblies (supercomplex SCI(1)III(2)IV(1) and megacomplex MCI(2)III(2)IV(2)). Found in a complex with TMEM177, COA6, COX18, COX20, SCO1 and SCO2. Interacts with TMEM177 in a COX20-dependent manner. Interacts with COX20. Interacts with COX16. Cu cation is required as a cofactor.

The protein resides in the mitochondrion inner membrane. The catalysed reaction is 4 Fe(II)-[cytochrome c] + O2 + 8 H(+)(in) = 4 Fe(III)-[cytochrome c] + 2 H2O + 4 H(+)(out). Its function is as follows. Component of the cytochrome c oxidase, the last enzyme in the mitochondrial electron transport chain which drives oxidative phosphorylation. The respiratory chain contains 3 multisubunit complexes succinate dehydrogenase (complex II, CII), ubiquinol-cytochrome c oxidoreductase (cytochrome b-c1 complex, complex III, CIII) and cytochrome c oxidase (complex IV, CIV), that cooperate to transfer electrons derived from NADH and succinate to molecular oxygen, creating an electrochemical gradient over the inner membrane that drives transmembrane transport and the ATP synthase. Cytochrome c oxidase is the component of the respiratory chain that catalyzes the reduction of oxygen to water. Electrons originating from reduced cytochrome c in the intermembrane space (IMS) are transferred via the dinuclear copper A center (CU(A)) of subunit 2 and heme A of subunit 1 to the active site in subunit 1, a binuclear center (BNC) formed by heme A3 and copper B (CU(B)). The BNC reduces molecular oxygen to 2 water molecules using 4 electrons from cytochrome c in the IMS and 4 protons from the mitochondrial matrix. The chain is Cytochrome c oxidase subunit 2 (MT-CO2) from Macrotus californicus (Californian leaf-nosed bat).